The sequence spans 1134 residues: Isoleucine--tRNA ligase (1134 aa).

The 'HIGH' region motif lies at 52 to 62 (PFANGLPHYGH). Positions 656-660 (KLSKR) match the 'KMSKS' region motif. Lysine 659 is an ATP binding site.

It belongs to the class-I aminoacyl-tRNA synthetase family. IleS type 2 subfamily. In terms of assembly, monomer. Zn(2+) is required as a cofactor.

The protein resides in the cytoplasm. It carries out the reaction tRNA(Ile) + L-isoleucine + ATP = L-isoleucyl-tRNA(Ile) + AMP + diphosphate. Its function is as follows. Catalyzes the attachment of isoleucine to tRNA(Ile). As IleRS can inadvertently accommodate and process structurally similar amino acids such as valine, to avoid such errors it has two additional distinct tRNA(Ile)-dependent editing activities. One activity is designated as 'pretransfer' editing and involves the hydrolysis of activated Val-AMP. The other activity is designated 'posttransfer' editing and involves deacylation of mischarged Val-tRNA(Ile). This is Isoleucine--tRNA ligase from Wolbachia sp. subsp. Brugia malayi (strain TRS).